The chain runs to 253 residues: 5'-nucleotidase SurE (253 aa).

A divalent metal cation contacts are provided by D8, D9, S39, and N97.

This sequence belongs to the SurE nucleotidase family. A divalent metal cation is required as a cofactor.

The protein localises to the cytoplasm. The enzyme catalyses a ribonucleoside 5'-phosphate + H2O = a ribonucleoside + phosphate. In terms of biological role, nucleotidase that shows phosphatase activity on nucleoside 5'-monophosphates. The protein is 5'-nucleotidase SurE of Aeromonas hydrophila subsp. hydrophila (strain ATCC 7966 / DSM 30187 / BCRC 13018 / CCUG 14551 / JCM 1027 / KCTC 2358 / NCIMB 9240 / NCTC 8049).